The chain runs to 315 residues: D-alanine--D-alanine ligase (315 aa).

One can recognise an ATP-grasp domain in the interval lysine 101–glutamate 297. Residue lysine 128–histidine 181 coordinates ATP. Mg(2+) contacts are provided by aspartate 249, glutamate 263, and asparagine 265.

Belongs to the D-alanine--D-alanine ligase family. The cofactor is Mg(2+). Mn(2+) is required as a cofactor.

It is found in the cytoplasm. It carries out the reaction 2 D-alanine + ATP = D-alanyl-D-alanine + ADP + phosphate + H(+). The protein operates within cell wall biogenesis; peptidoglycan biosynthesis. Its function is as follows. Cell wall formation. This is D-alanine--D-alanine ligase from Wolbachia pipientis wMel.